Reading from the N-terminus, the 126-residue chain is Aspartate 1-decarboxylase (126 aa).

The Schiff-base intermediate with substrate; via pyruvic acid role is filled by Ser25. A Pyruvic acid (Ser) modification is found at Ser25. Thr57 lines the substrate pocket. Residue Tyr58 is the Proton donor of the active site. 73–75 (GAA) contributes to the substrate binding site.

It belongs to the PanD family. In terms of assembly, heterooctamer of four alpha and four beta subunits. Requires pyruvate as cofactor. In terms of processing, is synthesized initially as an inactive proenzyme, which is activated by self-cleavage at a specific serine bond to produce a beta-subunit with a hydroxyl group at its C-terminus and an alpha-subunit with a pyruvoyl group at its N-terminus.

Its subcellular location is the cytoplasm. The catalysed reaction is L-aspartate + H(+) = beta-alanine + CO2. The protein operates within cofactor biosynthesis; (R)-pantothenate biosynthesis; beta-alanine from L-aspartate: step 1/1. Catalyzes the pyruvoyl-dependent decarboxylation of aspartate to produce beta-alanine. The polypeptide is Aspartate 1-decarboxylase (Escherichia coli O6:H1 (strain CFT073 / ATCC 700928 / UPEC)).